A 29-amino-acid chain; its full sequence is Galanin (29 aa).

Alanine 29 bears the Alanine amide mark.

The protein belongs to the galanin family.

The protein resides in the secreted. Functionally, contracts smooth muscle of the gastrointestinal and genitourinary tract, regulates growth hormone release, modulates insulin release, and may be involved in the control of adrenal secretion. The protein is Galanin (gal) of Pelophylax ridibundus (Marsh frog).